The sequence spans 396 residues: Pinosylvin synthase 2 (396 aa).

A substrate-binding site is contributed by 60-63; that stretch reads KFKR. C170 is a catalytic residue. Substrate-binding positions include L273 and 311 to 313; that span reads GGR.

This sequence belongs to the thiolase-like superfamily. Chalcone/stilbene synthases family. Homodimer.

It localises to the cytoplasm. It catalyses the reaction (E)-cinnamoyl-CoA + 3 malonyl-CoA + 3 H(+) = (E)-pinosylvin + 4 CO2 + 4 CoA. It carries out the reaction 3-phenylpropanoyl-CoA + 3 malonyl-CoA + 3 H(+) = dihydropinosylvin + 4 CO2 + 4 CoA. It functions in the pathway phytoalexin biosynthesis; pinosylvin biosynthesis. In terms of biological role, catalyzes the production of pinosylvin from cinnamoyl-CoA and malonyl-CoA, and dihydropinosylvin from dihydrocinnamoyl-CoA. The polypeptide is Pinosylvin synthase 2 (Pinus strobus (Eastern white pine)).